A 923-amino-acid chain; its full sequence is Probable dipeptidyl-aminopeptidase B (923 aa).

Over residues 1 to 16 (MATEKGHGRDDEERVP) the composition is skewed to basic and acidic residues. Residues 1-21 (MATEKGHGRDDEERVPLTRGS) are disordered. Topologically, residues 1-99 (MATEKGHGRD…KPMHKSVKIA (99 aa)) are cytoplasmic. Residues 100 to 120 (LWTLLFLSLGGWSLAFVLFIF) form a helical; Signal-anchor for type II membrane protein membrane-spanning segment. Topologically, residues 121–923 (RSHDTYETPI…GLSYNFKHLH (803 aa)) are vacuolar. N135, N351, and N574 each carry an N-linked (GlcNAc...) asparagine glycan. The active-site Charge relay system is S756. N-linked (GlcNAc...) asparagine glycosylation occurs at N815. Active-site charge relay system residues include D833 and H866. N902 is a glycosylation site (N-linked (GlcNAc...) asparagine).

The protein belongs to the peptidase S9B family.

Its subcellular location is the vacuole membrane. The catalysed reaction is Release of an N-terminal dipeptide, Xaa-Yaa-|-Zaa-, from a polypeptide, preferentially when Yaa is Pro, provided Zaa is neither Pro nor hydroxyproline.. In terms of biological role, type IV dipeptidyl-peptidase which removes N-terminal dipeptides sequentially from polypeptides having unsubstituted N-termini provided that the penultimate residue is proline. In Ajellomyces capsulatus (strain G186AR / H82 / ATCC MYA-2454 / RMSCC 2432) (Darling's disease fungus), this protein is Probable dipeptidyl-aminopeptidase B (DAPB).